Consider the following 1033-residue polypeptide: Isoleucine--tRNA ligase (1033 aa).

The 'HIGH' region signature appears at 47 to 57 (PTANGLPHVGH). Residues 590–594 (KMSKS) carry the 'KMSKS' region motif. Position 593 (K593) interacts with ATP.

It belongs to the class-I aminoacyl-tRNA synthetase family. IleS type 2 subfamily. As to quaternary structure, monomer. Zn(2+) is required as a cofactor.

The protein localises to the cytoplasm. The enzyme catalyses tRNA(Ile) + L-isoleucine + ATP = L-isoleucyl-tRNA(Ile) + AMP + diphosphate. In terms of biological role, catalyzes the attachment of isoleucine to tRNA(Ile). As IleRS can inadvertently accommodate and process structurally similar amino acids such as valine, to avoid such errors it has two additional distinct tRNA(Ile)-dependent editing activities. One activity is designated as 'pretransfer' editing and involves the hydrolysis of activated Val-AMP. The other activity is designated 'posttransfer' editing and involves deacylation of mischarged Val-tRNA(Ile). The sequence is that of Isoleucine--tRNA ligase from Bacillus thuringiensis (strain Al Hakam).